A 153-amino-acid polypeptide reads, in one-letter code: Cytochrome c-type biogenesis protein CcmE (153 aa).

Residues 1–7 (MTRKKRR) are Cytoplasmic-facing. A helical; Signal-anchor for type II membrane protein transmembrane segment spans residues 8-28 (LYFVVLGMLALFAAAGLTLTA). At 29 to 153 (FQDNLVFFYS…PPTAAAAPAP (125 aa)) the chain is on the periplasmic side. Heme contacts are provided by histidine 121 and tyrosine 125. Residues 132-153 (ESLKASGKWQHGPPTAAAAPAP) form a disordered region. Over residues 144–153 (PPTAAAAPAP) the composition is skewed to low complexity.

This sequence belongs to the CcmE/CycJ family.

It is found in the cell inner membrane. Heme chaperone required for the biogenesis of c-type cytochromes. Transiently binds heme delivered by CcmC and transfers the heme to apo-cytochromes in a process facilitated by CcmF and CcmH. The chain is Cytochrome c-type biogenesis protein CcmE from Rhodospirillum rubrum (strain ATCC 11170 / ATH 1.1.1 / DSM 467 / LMG 4362 / NCIMB 8255 / S1).